A 300-amino-acid polypeptide reads, in one-letter code: Probable protein phosphatase 2C 2 (300 aa).

The PPM-type phosphatase domain occupies 23-298 (IFAASEMQGW…DNMTTILVYL (276 aa)). Mn(2+)-binding residues include Asp57, Gly58, Asp237, and Asp289.

It belongs to the PP2C family. Mg(2+) serves as cofactor. The cofactor is Mn(2+).

Its subcellular location is the membrane. The catalysed reaction is O-phospho-L-seryl-[protein] + H2O = L-seryl-[protein] + phosphate. It catalyses the reaction O-phospho-L-threonyl-[protein] + H2O = L-threonyl-[protein] + phosphate. In terms of biological role, enzyme with a broad specificity. In Paramecium tetraurelia, this protein is Probable protein phosphatase 2C 2.